A 140-amino-acid chain; its full sequence is Phosphopantetheine adenylyltransferase (140 aa).

Serine 9 is a binding site for substrate. ATP is bound by residues 9–10 (SF) and histidine 17. Substrate is bound by residues lysine 41, threonine 74, and arginine 88. ATP-binding positions include 89-91 (GLR), glutamate 99, and 124-130 (KRSLSST).

This sequence belongs to the bacterial CoaD family. In terms of assembly, homohexamer. Requires Mg(2+) as cofactor.

The protein resides in the cytoplasm. It carries out the reaction (R)-4'-phosphopantetheine + ATP + H(+) = 3'-dephospho-CoA + diphosphate. The protein operates within cofactor biosynthesis; coenzyme A biosynthesis; CoA from (R)-pantothenate: step 4/5. Functionally, reversibly transfers an adenylyl group from ATP to 4'-phosphopantetheine, yielding dephospho-CoA (dPCoA) and pyrophosphate. This is Phosphopantetheine adenylyltransferase from Mycoplasma capricolum subsp. capricolum (strain California kid / ATCC 27343 / NCTC 10154).